The chain runs to 424 residues: UPF0229 protein PC1_1960 (424 aa).

A disordered region spans residues 46–109 (IESGESVSIP…GQGDASKDGE (64 aa)). The segment covering 77–90 (PGNDHFVQNDKIER) has biased composition (basic and acidic residues). The segment covering 92–101 (QGGGGGGSGQ) has biased composition (gly residues).

It belongs to the UPF0229 family.

This is UPF0229 protein PC1_1960 from Pectobacterium carotovorum subsp. carotovorum (strain PC1).